A 447-amino-acid polypeptide reads, in one-letter code: Phosphoglucosamine mutase (447 aa).

The active-site Phosphoserine intermediate is the Ser103. Residues Ser103, Asp242, Asp244, and Asp246 each contribute to the Mg(2+) site. A Phosphoserine modification is found at Ser103.

Belongs to the phosphohexose mutase family. It depends on Mg(2+) as a cofactor. In terms of processing, activated by phosphorylation.

It carries out the reaction alpha-D-glucosamine 1-phosphate = D-glucosamine 6-phosphate. Catalyzes the conversion of glucosamine-6-phosphate to glucosamine-1-phosphate. The chain is Phosphoglucosamine mutase from Dinoroseobacter shibae (strain DSM 16493 / NCIMB 14021 / DFL 12).